We begin with the raw amino-acid sequence, 471 residues long: Probable ribonuclease FAU-1 (471 aa).

In terms of domain architecture, S1 motif spans 93–139 (GAVFDAAVDHTVGGGAILDLGDDREAYLPFGAVDDHVTDGDTLRVAI).

It belongs to the FAU-1 family.

Functionally, probable RNase involved in rRNA stability through maturation and/or degradation of precursor rRNAs. Binds to RNA in loop regions with AU-rich sequences. The polypeptide is Probable ribonuclease FAU-1 (Halobacterium salinarum (strain ATCC 29341 / DSM 671 / R1)).